Consider the following 250-residue polypeptide: Probable transcriptional regulatory protein MAP_1030 (250 aa).

This sequence belongs to the TACO1 family.

It localises to the cytoplasm. The chain is Probable transcriptional regulatory protein MAP_1030 from Mycolicibacterium paratuberculosis (strain ATCC BAA-968 / K-10) (Mycobacterium paratuberculosis).